The chain runs to 287 residues: Large ribosomal subunit protein uL2 (287 aa).

The interval 203-287 is disordered; the sequence is LSAGKAGRNR…SKRGRGGRES (85 aa). Composition is skewed to basic residues over residues 209–220 and 258–287; these read GRNRWKGRRPKV and KTRKPKKASSKLIIRRRRKSSKRGRGGRES.

Belongs to the universal ribosomal protein uL2 family. Part of the 50S ribosomal subunit. Forms a bridge to the 30S subunit in the 70S ribosome.

In terms of biological role, one of the primary rRNA binding proteins. Required for association of the 30S and 50S subunits to form the 70S ribosome, for tRNA binding and peptide bond formation. It has been suggested to have peptidyltransferase activity; this is somewhat controversial. Makes several contacts with the 16S rRNA in the 70S ribosome. The sequence is that of Large ribosomal subunit protein uL2 from Nostoc sp. (strain PCC 7120 / SAG 25.82 / UTEX 2576).